Reading from the N-terminus, the 201-residue chain is Recombination protein RecR (201 aa).

The C4-type zinc-finger motif lies at 59-74 (CEICGNMDTENICCIC). One can recognise a Toprim domain in the interval 82 to 177 (SVIAVVETVA…KISRLASGIP (96 aa)).

Belongs to the RecR family.

In terms of biological role, may play a role in DNA repair. It seems to be involved in an RecBC-independent recombinational process of DNA repair. It may act with RecF and RecO. This is Recombination protein RecR from Rickettsia felis (strain ATCC VR-1525 / URRWXCal2) (Rickettsia azadi).